Here is an 87-residue protein sequence, read N- to C-terminus: MSERNDRKVYVGKVVSDKMDKTITVLVETYKTHKLYGKRVKYSKKYKTHDENNSAKLGDIVKIQETRPLSASKRFRLVEIVEESVII.

Belongs to the universal ribosomal protein uS17 family. In terms of assembly, part of the 30S ribosomal subunit.

Functionally, one of the primary rRNA binding proteins, it binds specifically to the 5'-end of 16S ribosomal RNA. This Staphylococcus haemolyticus (strain JCSC1435) protein is Small ribosomal subunit protein uS17.